The sequence spans 308 residues: Protoheme IX farnesyltransferase (308 aa).

8 helical membrane-spanning segments follow: residues 31 to 51 (VIELLLVTAIPAMLLAQRGTV), 53 to 73 (PLLIVNTLIGGMLAAGGANAL), 102 to 122 (NALVFGLVLTAGSFLWLWWTT), 124 to 144 (LLSGLLALATIAFYVFIYTLL), 149 to 169 (TSQNVVWGGAAGCMPVMIGWS), 170 to 190 (AVTGTIQWPALVMFAIIFFWT), 240 to 260 (LALATGWLYAAVALVAGVWFL), and 288 to 308 (YLAVVFCALAIDSAIGLPHLF).

The protein belongs to the UbiA prenyltransferase family. Protoheme IX farnesyltransferase subfamily.

It is found in the cell membrane. It carries out the reaction heme b + (2E,6E)-farnesyl diphosphate + H2O = Fe(II)-heme o + diphosphate. The protein operates within porphyrin-containing compound metabolism; heme O biosynthesis; heme O from protoheme: step 1/1. Functionally, converts heme B (protoheme IX) to heme O by substitution of the vinyl group on carbon 2 of heme B porphyrin ring with a hydroxyethyl farnesyl side group. This Mycolicibacterium paratuberculosis (strain ATCC BAA-968 / K-10) (Mycobacterium paratuberculosis) protein is Protoheme IX farnesyltransferase.